The chain runs to 189 residues: uncharacterized protein (189 aa).

It belongs to the mimivirus R457/R459 family.

Its subcellular location is the virion. This is an uncharacterized protein from Acanthamoeba polyphaga mimivirus (APMV).